We begin with the raw amino-acid sequence, 183 residues long: Protein vem-1 (183 aa).

A helical transmembrane segment spans residues 9-29 (FTMYDAVFLVVVLGFFFYWLT). Residues 47–146 (MSDMTVEELR…FKYLTVGRLV (100 aa)) enclose the Cytochrome b5 heme-binding domain.

This sequence belongs to the cytochrome b5 family. MAPR subfamily. Interacts with unc-40 (via cytoplasmic domain). As to expression, expressed in the AVG pioneer midline neuron and in several nerve ring neurons that extend projecting axons into the right ventral nerve cord.

It localises to the membrane. It is found in the cell projection. The protein resides in the axon. Its function is as follows. Transmembrane protein required for the axon guidance of a subset of ventral nerve cord-associated interneurons and motor neurons. May function with the netrin receptor unc-40 in axon guidance. The sequence is that of Protein vem-1 from Caenorhabditis elegans.